The following is a 238-amino-acid chain: tRNA1(Val) (adenine(37)-N6)-methyltransferase (238 aa).

This sequence belongs to the methyltransferase superfamily. tRNA (adenine-N(6)-)-methyltransferase family.

It localises to the cytoplasm. It carries out the reaction adenosine(37) in tRNA1(Val) + S-adenosyl-L-methionine = N(6)-methyladenosine(37) in tRNA1(Val) + S-adenosyl-L-homocysteine + H(+). Its function is as follows. Specifically methylates the adenine in position 37 of tRNA(1)(Val) (anticodon cmo5UAC). The sequence is that of tRNA1(Val) (adenine(37)-N6)-methyltransferase from Shewanella putrefaciens (strain CN-32 / ATCC BAA-453).